A 752-amino-acid polypeptide reads, in one-letter code: Granule-bound starch synthase 2, chloroplastic/amyloplastic (752 aa).

The N-terminal 57 residues, 1–57 (MMLSLGSDATVLPFHAKNLKFTPKLSTLNGDLAFSKGLGVGRLNCGSVRLNHKQHVR), are a transit peptide targeting the chloroplast. Disordered stretches follow at residues 116-146 (LEGN…SGSA) and 224-253 (FENF…EKPP). An ADP-alpha-D-glucose-binding site is contributed by Lys-275.

It belongs to the glycosyltransferase 1 family. Bacterial/plant glycogen synthase subfamily. Widely expressed.

Its subcellular location is the plastid. The protein localises to the chloroplast. The protein resides in the amyloplast. The catalysed reaction is [(1-&gt;4)-alpha-D-glucosyl](n) + ADP-alpha-D-glucose = [(1-&gt;4)-alpha-D-glucosyl](n+1) + ADP + H(+). It functions in the pathway glycan biosynthesis; starch biosynthesis. The chain is Granule-bound starch synthase 2, chloroplastic/amyloplastic from Pisum sativum (Garden pea).